A 507-amino-acid polypeptide reads, in one-letter code: Probable serine/threonine-protein kinase DDB_G0268078 (507 aa).

A Protein kinase domain is found at Tyr4 to Phe286. ATP is bound by residues Val10 to Val18 and Lys33. Asp125 (proton acceptor) is an active-site residue. Residues Asn323–Asn347 are compositionally biased toward low complexity. Disordered stretches follow at residues Asn323–Ser364, Asn381–Ser404, and Gln428–Leu507. The segment covering Gln348–Pro361 has biased composition (polar residues). The span at Asn381–Asn399 shows a compositional bias: low complexity. Positions Gln429–Ile450 are enriched in pro residues. Residues Leu451–Ser470 are compositionally biased toward low complexity. 2 stretches are compositionally biased toward polar residues: residues Lys471–Leu481 and Arg491–Leu507.

It belongs to the protein kinase superfamily. CMGC Ser/Thr protein kinase family. CDC2/CDKX subfamily.

It catalyses the reaction L-seryl-[protein] + ATP = O-phospho-L-seryl-[protein] + ADP + H(+). It carries out the reaction L-threonyl-[protein] + ATP = O-phospho-L-threonyl-[protein] + ADP + H(+). The sequence is that of Probable serine/threonine-protein kinase DDB_G0268078 from Dictyostelium discoideum (Social amoeba).